We begin with the raw amino-acid sequence, 147 residues long: Membrane-spanning 4-domains subfamily A member 6E (147 aa).

Residues 1–52 are Cytoplasmic-facing; the sequence is MTSQPISNETIIMLPSNVINFSQAEKPEPTNQGQDSLKKRLQAKVKVIGVHS. A helical transmembrane segment spans residues 53–73; that stretch reads SLAGSILSALSALVGFILLSV. At 74–120 the chain is on the extracellular side; that stretch reads NPAALNPASLQCKLDEKDIPTRLLLSYDYHSPYTMDCHRAKASLAGT. The chain crosses the membrane as a helical span at residues 121–141; the sequence is LSLMLVSTVLEFCLAVLTAVL. The Cytoplasmic portion of the chain corresponds to 142-147; the sequence is QWKQTV.

It belongs to the MS4A family. As to expression, expressed by malignant and fetal tissue at very low levels.

It localises to the membrane. Functionally, may be involved in signal transduction as a component of a multimeric receptor complex. The protein is Membrane-spanning 4-domains subfamily A member 6E (MS4A6E) of Homo sapiens (Human).